Consider the following 1239-residue polypeptide: Erythroid differentiation-related factor 1 (1239 aa).

Disordered regions lie at residues 1–39, 219–269, 517–559, and 620–646; these read MGDPKEAGAEASPSGAAARGGLSLLSQADSEEPSAQGSA, AQPV…REPL, PKKE…DPAD, and KKESDLPAADPSTPIPLKYEDESTRGG. Low complexity-rich tracts occupy residues 9–28 and 253–263; these read AEASPSGAAARGGLSLLSQA and SSVSEDPSASS. The span at 530-547 shows a compositional bias: acidic residues; the sequence is NSDESYSEEEEEMADSDE. TPR repeat units lie at residues 693–726 and 914–953; these read SKAYYILSDAAMSLQKYGRALRYIKLALQSHDTY and AQAHCGAEDEFKREFSPEEGLYYSKAVDYYLKALRSLGTR.

It is found in the nucleus. In terms of biological role, transcription factor involved in erythroid differentiation. Involved in transcriptional activation of the globin gene. This chain is Erythroid differentiation-related factor 1 (Edrf1), found in Mus musculus (Mouse).